The chain runs to 318 residues: Small ribosomal subunit protein RACK1 (318 aa).

WD repeat units lie at residues 11 to 44 (GHRG…LSWG), 65 to 95 (GHSA…RLWN), 107 to 137 (GHTK…RVWN), 150 to 182 (AHTD…KVWD), 194 to 224 (GHTN…RLWD), 235 to 264 (AAGA…RIFD), and 282 to 315 (KKIV…WGVS).

Belongs to the WD repeat G protein beta family. Ribosomal protein RACK1 subfamily.

The sequence is that of Small ribosomal subunit protein RACK1 from Trypanosoma brucei brucei.